We begin with the raw amino-acid sequence, 1273 residues long: DNA-directed RNA polymerase subunit beta (1273 aa).

It belongs to the RNA polymerase beta chain family. The RNAP catalytic core consists of 2 alpha, 1 beta, 1 beta' and 1 omega subunit. When a sigma factor is associated with the core the holoenzyme is formed, which can initiate transcription.

The enzyme catalyses RNA(n) + a ribonucleoside 5'-triphosphate = RNA(n+1) + diphosphate. Its function is as follows. DNA-dependent RNA polymerase catalyzes the transcription of DNA into RNA using the four ribonucleoside triphosphates as substrates. This Onion yellows phytoplasma (strain OY-M) protein is DNA-directed RNA polymerase subunit beta.